Here is a 324-residue protein sequence, read N- to C-terminus: CYFIP-related Rac1 interactor B (324 aa).

A lipid anchor (N-myristoyl glycine) is attached at Gly2. Residue Lys74 forms a Glycyl lysine isopeptide (Lys-Gly) (interchain with G-Cter in ubiquitin) linkage.

Belongs to the CYRI family. In terms of assembly, interacts with RAC1 (GTP-bound form preferentially). Post-translationally, ubiquitinated at Lys-74 upon Salmonella bacterial infection.

The protein resides in the membrane. Its subcellular location is the mitochondrion. Functionally, negatively regulates RAC1 signaling and RAC1-driven cytoskeletal remodeling. Regulates chemotaxis, cell migration and epithelial polarization by controlling the polarity, plasticity, duration and extent of protrusions. Limits Rac1 mediated activation of the Scar/WAVE complex, focuses protrusion signals and regulates pseudopod complexity by inhibiting Scar/WAVE-induced actin polymerization. Protects against Salmonella bacterial infection. Attenuates processes such as macropinocytosis, phagocytosis and cell migration and restrict sopE-mediated bacterial entry. Also restricts infection mediated by Mycobacterium tuberculosis and Listeria monocytogenes. Involved in the regulation of mitochondrial dynamics and oxidative stress. The polypeptide is CYFIP-related Rac1 interactor B (Homo sapiens (Human)).